Here is a 212-residue protein sequence, read N- to C-terminus: PQMMGIPLILIAIFLPTLLIYTSPTRLSTNRMTTLQLWLTNTITKQLFLPVNTPGHKWAAMLMTLMIXLLSMNLLGLLPYTFTPTTQLSMNMALAIPLWLATVLTGLRNQPTASLGHLLPEGTPTPLIPLLIIIETVSLFIRPLALGVRLTANLTAGHLLIQLISTAAFVLLPMMTLTALSTFIVLVLLTGLEIAVAMIQAYVFTLLLTLYL.

The next 6 membrane-spanning stretches (helical) occupy residues 3–23 (MMGIPLILIAIFLPTLLIYTS), 58–78 (WAAMLMTLMIXLLSMNLLGLL), 87–107 (QLSMNMALAIPLWLATVLTGL), 128–148 (IPLLIIIETVSLFIRPLALGV), 169–189 (FVLLPMMTLTALSTFIVLVLL), and 192–212 (LEIAVAMIQAYVFTLLLTLYL).

This sequence belongs to the ATPase A chain family. In terms of assembly, component of the ATP synthase complex composed at least of ATP5F1A/subunit alpha, ATP5F1B/subunit beta, ATP5MC1/subunit c (homooctomer), MT-ATP6/subunit a, MT-ATP8/subunit 8, ATP5ME/subunit e, ATP5MF/subunit f, ATP5MG/subunit g, ATP5MK/subunit k, ATP5MJ/subunit j, ATP5F1C/subunit gamma, ATP5F1D/subunit delta, ATP5F1E/subunit epsilon, ATP5PF/subunit F6, ATP5PB/subunit b, ATP5PD/subunit d, ATP5PO/subunit OSCP. ATP synthase complex consists of a soluble F(1) head domain (subunits alpha(3) and beta(3)) - the catalytic core - and a membrane F(0) domain - the membrane proton channel (subunits c, a, 8, e, f, g, k and j). These two domains are linked by a central stalk (subunits gamma, delta, and epsilon) rotating inside the F1 region and a stationary peripheral stalk (subunits F6, b, d, and OSCP). Interacts with DNAJC30; interaction is direct.

It localises to the mitochondrion inner membrane. It catalyses the reaction H(+)(in) = H(+)(out). In terms of biological role, subunit a, of the mitochondrial membrane ATP synthase complex (F(1)F(0) ATP synthase or Complex V) that produces ATP from ADP in the presence of a proton gradient across the membrane which is generated by electron transport complexes of the respiratory chain. ATP synthase complex consist of a soluble F(1) head domain - the catalytic core - and a membrane F(1) domain - the membrane proton channel. These two domains are linked by a central stalk rotating inside the F(1) region and a stationary peripheral stalk. During catalysis, ATP synthesis in the catalytic domain of F(1) is coupled via a rotary mechanism of the central stalk subunits to proton translocation. With the subunit c (ATP5MC1), forms the proton-conducting channel in the F(0) domain, that contains two crucial half-channels (inlet and outlet) that facilitate proton movement from the mitochondrial intermembrane space (IMS) into the matrix. Protons are taken up via the inlet half-channel and released through the outlet half-channel, following a Grotthuss mechanism. This is ATP synthase F(0) complex subunit a from Tropidurus hispidus (Peters' lava lizard).